The primary structure comprises 2339 residues: Inverse autotransporter adhesin YeeJ (2339 aa).

Residues Met-1–Ala-26 form the signal peptide. A LysM domain is found at Val-50–Val-98. Positions Thr-125–Asn-400 are inverse autotransporter. Positions Gln-513 to Val-605 are invasin 3 domain. 13 Big-1 domains span residues Ile-721–Val-815, Gln-822–Ile-913, Ala-920–Val-1017, Val-1024–Val-1121, Gln-1128–Ile-1221, Ile-1229–Val-1331, His-1339–Val-1432, Glu-1439–Ile-1535, Gln-1542–Ile-1639, Lys-1646–Val-1730, Ile-1746–Ile-1837, Lys-1840–Thr-1934, and Val-1942–Val-2034. The segment at Lys-2236–Leu-2339 is C-type lectin domain.

The protein belongs to the intimin/invasin family.

It localises to the cell outer membrane. Functionally, a cryptic inverse autotransporter, it is not expressed in wild-type strain MG1655. Upon overexpression shows increased adherence to polyvinyl chloride (PVC) plates and increased mature biofilm formation. Probably binds peptidoglycan. This chain is Inverse autotransporter adhesin YeeJ (yeeJ), found in Escherichia coli (strain K12).